Consider the following 397-residue polypeptide: Tubby-like protein 8 (397 aa).

The span at 1 to 16 (MAGSRKVNDLLEENKG) shows a compositional bias: basic and acidic residues. The disordered stretch occupies residues 1-46 (MAGSRKVNDLLEENKGNVDTITGSLSTQKGEDKENVSPEKVSTSVE). Residues 17-28 (NVDTITGSLSTQ) show a composition bias toward polar residues.

This sequence belongs to the TUB family. In terms of tissue distribution, mostly expressed in roots, flowers and siliques.

The protein is Tubby-like protein 8 of Arabidopsis thaliana (Mouse-ear cress).